Here is a 292-residue protein sequence, read N- to C-terminus: Cyclin-dependent-like kinase 5 (292 aa).

Positions 4–286 (YDKMEKIGEG…ADAALRHAYF (283 aa)) constitute a Protein kinase domain. Residues 10–18 (IGEGTYGTV) and Lys-33 each bind ATP. Catalysis depends on Asp-126, which acts as the Proton acceptor. Mg(2+) is bound by residues Asn-131 and Asp-144.

It belongs to the protein kinase superfamily. CMGC Ser/Thr protein kinase family. CDC2/CDKX subfamily. Heterodimer composed of a catalytic subunit cdk-5 and a regulatory subunit cdka-1. Interaction with cdka-1 is required for cdk-5 activation. Mg(2+) is required as a cofactor.

The protein resides in the cytoplasm. The protein localises to the cell projection. Its subcellular location is the dendrite. It catalyses the reaction L-seryl-[protein] + ATP = O-phospho-L-seryl-[protein] + ADP + H(+). The catalysed reaction is L-threonyl-[protein] + ATP = O-phospho-L-threonyl-[protein] + ADP + H(+). Functionally, proline-directed serine/threonine-protein kinase which, in several motor neurons, promotes the polarized trafficking of synaptic vesicles and dense-core vesicles (DCV). In the ventral nerve cord, phosphorylates lin-10 and thereby prevents lin-10-mediated anterograde trafficking of the glutamate receptor glr-1. Involved in the inhibition of glr-1 trafficking in hypoxic conditions. In DA motor neurons but not in DB motor neurons, regulates axonal transport of synaptic vesicle precursors by inhibiting dynein-mediated retrograde transport. Regulates the trafficking of dense-core vesicles in DA and DB motor neurons by promoting anterograde trafficking to the axon and preventing dynein-dependent trafficking to the dendrite. May regulate these processes in association with cdka-1/p35. Activity may be regulated by cyy-1. Involved in synapse formation during DD motor neuron remodeling by regulating transport of disassembled synaptic material to the new synaptic sites probably by activating the motor protein unc-104/kinesin-3. Regulates microtubule polarity in the dendrite of DB motor neurons. May also play a role in GABAergic synaptic vesicle localization in the ventral nerve cord. The polypeptide is Cyclin-dependent-like kinase 5 (Caenorhabditis elegans).